The chain runs to 298 residues: ATP synthase gamma chain (298 aa).

It belongs to the ATPase gamma chain family. F-type ATPases have 2 components, CF(1) - the catalytic core - and CF(0) - the membrane proton channel. CF(1) has five subunits: alpha(3), beta(3), gamma(1), delta(1), epsilon(1). CF(0) has three main subunits: a, b and c.

It is found in the cell inner membrane. In terms of biological role, produces ATP from ADP in the presence of a proton gradient across the membrane. The gamma chain is believed to be important in regulating ATPase activity and the flow of protons through the CF(0) complex. In Francisella philomiragia subsp. philomiragia (strain ATCC 25017 / CCUG 19701 / FSC 153 / O#319-036), this protein is ATP synthase gamma chain.